A 135-amino-acid chain; its full sequence is C-type Lectin CRL (135 aa).

Intrachain disulfides connect C3–C14, C31–C131, C38–C133, and C106–C123. The C-type lectin domain maps to M10–Q132. Ca(2+)-binding residues include Q96, D98, E104, N119, and D120. The Galactose-binding signature appears at Q96–D98.

Belongs to the true venom lectin family. As to quaternary structure, homodimer; disulfide-linked. As to expression, expressed by the venom gland.

The protein localises to the secreted. Its function is as follows. Beta-galactoside and N-acetylgalactosamine (GalNAc) specific C-type lectin. This Crotalus ruber ruber (Red diamond rattlesnake) protein is C-type Lectin CRL.